The primary structure comprises 188 residues: NAD(P)H-quinone oxidoreductase subunit 6, chloroplastic (188 aa).

5 helical membrane passes run G10 to N30, I32 to V52, A61 to I81, G97 to L117, and F153 to T173.

The protein belongs to the complex I subunit 6 family. As to quaternary structure, NDH is composed of at least 16 different subunits, 5 of which are encoded in the nucleus.

It localises to the plastid. Its subcellular location is the chloroplast thylakoid membrane. It carries out the reaction a plastoquinone + NADH + (n+1) H(+)(in) = a plastoquinol + NAD(+) + n H(+)(out). The catalysed reaction is a plastoquinone + NADPH + (n+1) H(+)(in) = a plastoquinol + NADP(+) + n H(+)(out). In terms of biological role, NDH shuttles electrons from NAD(P)H:plastoquinone, via FMN and iron-sulfur (Fe-S) centers, to quinones in the photosynthetic chain and possibly in a chloroplast respiratory chain. The immediate electron acceptor for the enzyme in this species is believed to be plastoquinone. Couples the redox reaction to proton translocation, and thus conserves the redox energy in a proton gradient. The polypeptide is NAD(P)H-quinone oxidoreductase subunit 6, chloroplastic (ndhG) (Psilotum nudum (Whisk fern)).